Reading from the N-terminus, the 465-residue chain is Fumarate hydratase class II (465 aa).

Substrate contacts are provided by residues Ser-99–Thr-101, Arg-127, His-130–Asp-133, Ser-140–Asn-142, and Thr-188. His-189 (proton donor/acceptor) is an active-site residue. Residue Ser-319 is part of the active site. Residues Ser-320 and Lys-325–Asn-327 contribute to the substrate site.

Belongs to the class-II fumarase/aspartase family. Fumarase subfamily. As to quaternary structure, homotetramer.

Its subcellular location is the cytoplasm. The enzyme catalyses (S)-malate = fumarate + H2O. It functions in the pathway carbohydrate metabolism; tricarboxylic acid cycle; (S)-malate from fumarate: step 1/1. In terms of biological role, involved in the TCA cycle. Catalyzes the stereospecific interconversion of fumarate to L-malate. The protein is Fumarate hydratase class II of Parasynechococcus marenigrum (strain WH8102).